Reading from the N-terminus, the 408-residue chain is Imidazolonepropionase (408 aa).

2 residues coordinate Fe(3+): histidine 73 and histidine 75. Histidine 73 and histidine 75 together coordinate Zn(2+). Positions 82, 145, and 178 each coordinate 4-imidazolone-5-propanoate. Residue tyrosine 145 coordinates N-formimidoyl-L-glutamate. Histidine 243 is a Fe(3+) binding site. A Zn(2+)-binding site is contributed by histidine 243. Glutamine 246 is a 4-imidazolone-5-propanoate binding site. A Fe(3+)-binding site is contributed by aspartate 318. Aspartate 318 is a binding site for Zn(2+). Residues asparagine 320 and glycine 322 each contribute to the N-formimidoyl-L-glutamate site. Serine 323 is a 4-imidazolone-5-propanoate binding site.

The protein belongs to the metallo-dependent hydrolases superfamily. HutI family. Requires Zn(2+) as cofactor. It depends on Fe(3+) as a cofactor.

Its subcellular location is the cytoplasm. The catalysed reaction is 4-imidazolone-5-propanoate + H2O = N-formimidoyl-L-glutamate. It functions in the pathway amino-acid degradation; L-histidine degradation into L-glutamate; N-formimidoyl-L-glutamate from L-histidine: step 3/3. Catalyzes the hydrolytic cleavage of the carbon-nitrogen bond in imidazolone-5-propanoate to yield N-formimidoyl-L-glutamate. It is the third step in the universal histidine degradation pathway. The chain is Imidazolonepropionase from Shewanella woodyi (strain ATCC 51908 / MS32).